We begin with the raw amino-acid sequence, 67 residues long: Phycobilisome 7.8 kDa linker polypeptide, allophycocyanin-associated, core (67 aa).

A CpcD-like domain is found at 1-56 (MRMFRITACVPSQTRIRTQRELQNTYFTKLVPYDNWFREQQRIMKMGGKIVKVELA).

It belongs to the phycobilisome linker protein family.

It localises to the cellular thylakoid membrane. In terms of biological role, rod linker protein, associated with allophycocyanin. Linker polypeptides determine the state of aggregation and the location of the disk-shaped phycobiliprotein units within the phycobilisome and modulate their spectroscopic properties in order to mediate a directed and optimal energy transfer. The polypeptide is Phycobilisome 7.8 kDa linker polypeptide, allophycocyanin-associated, core (apcC) (Synechocystis sp. (strain PCC 6714) (Aphanocapsa sp. (strain PCC 6714))).